A 139-amino-acid polypeptide reads, in one-letter code: Acidic phospholipase A2 4 (139 aa).

The signal sequence occupies residues M1–G16. 7 disulfides stabilise this stretch: C42-C131, C44-C60, C59-C111, C65-C139, C66-C104, C73-C97, and C91-C102. The Ca(2+) site is built by Y43, G45, and G47. H63 is an active-site residue. D64 contributes to the Ca(2+) binding site. D105 is an active-site residue.

The protein belongs to the phospholipase A2 family. Group II subfamily. D49 sub-subfamily. Ca(2+) is required as a cofactor. As to expression, expressed by the venom gland.

The protein resides in the secreted. The catalysed reaction is a 1,2-diacyl-sn-glycero-3-phosphocholine + H2O = a 1-acyl-sn-glycero-3-phosphocholine + a fatty acid + H(+). In terms of biological role, PLA2 catalyzes the calcium-dependent hydrolysis of the 2-acyl groups in 3-sn-phosphoglycerides. The chain is Acidic phospholipase A2 4 from Echis carinatus sochureki (Saw-scaled viper).